Reading from the N-terminus, the 228-residue chain is Cytidylate kinase (228 aa).

Residue 17 to 25 participates in ATP binding; it reads GPTASGKGT.

It belongs to the cytidylate kinase family. Type 1 subfamily.

The protein localises to the cytoplasm. It catalyses the reaction CMP + ATP = CDP + ADP. It carries out the reaction dCMP + ATP = dCDP + ADP. The protein is Cytidylate kinase of Burkholderia mallei (strain NCTC 10247).